The chain runs to 146 residues: Hemoglobin subunit beta-1 (146 aa).

Position 1 is an N-acetylserine (S1). The 145-residue stretch at 2 to 146 (FLSAEEKGLV…VASALAHRYH (145 aa)) folds into the Globin domain. K17 carries the post-translational modification N6-succinyllysine. A phosphoserine mark is found at S44 and S50. K59 carries the post-translational modification N6-succinyllysine. Positions 63 and 92 each coordinate heme b. An Asymmetric dimethylarginine modification is found at R104.

It belongs to the globin family. Heterotetramer of two alpha chains and two beta chains. Red blood cells.

In terms of biological role, involved in oxygen transport from the lung to the various peripheral tissues. The chain is Hemoglobin subunit beta-1 (HBB1) from Panthera leo (Lion).